The chain runs to 134 residues: Small ribosomal subunit protein uS11 (134 aa).

Positions 114-134 (TPVPHNGTRPPRKWFKRQEKR) are disordered. A compositionally biased stretch (basic residues) spans 123–134 (PPRKWFKRQEKR).

It belongs to the universal ribosomal protein uS11 family. Part of the 30S ribosomal subunit. Interacts with proteins S7 and S18. Binds to IF-3.

Located on the platform of the 30S subunit, it bridges several disparate RNA helices of the 16S rRNA. Forms part of the Shine-Dalgarno cleft in the 70S ribosome. In Mesomycoplasma hyopneumoniae (strain 232) (Mycoplasma hyopneumoniae), this protein is Small ribosomal subunit protein uS11.